Consider the following 399-residue polypeptide: Guanine nucleotide-binding protein negative regulator 1 (399 aa).

WD repeat units lie at residues 44 to 83, 105 to 145, 150 to 194, 207 to 247, 252 to 292, and 296 to 337; these read KPLN…LSKK, YSYS…NKAS, DHQE…VMTT, SLKG…PCQL, ERGN…DMVY, and GHRG…EETH.

As to quaternary structure, interacts with gpa1.

It is found in the cytoplasm. In terms of biological role, negatively regulates the pheromone-response pathway. Acts as a structural mimic of the G protein beta subunit thereby interacting with gpa1 which then inhibits gpa1 signaling. The chain is Guanine nucleotide-binding protein negative regulator 1 (gnr1) from Schizosaccharomyces pombe (strain 972 / ATCC 24843) (Fission yeast).